The sequence spans 259 residues: Small ribosomal subunit protein mS23 (259 aa).

Positions 230 to 244 (RAASFTGSALPSSEE) are enriched in polar residues. Residues 230-259 (RAASFTGSALPSSEESAPVDEETEKVPQQV) form a disordered region.

It belongs to the mitochondrion-specific ribosomal protein mS23 family. In terms of assembly, component of the mitochondrial small ribosomal subunit.

Its subcellular location is the mitochondrion. The protein is Small ribosomal subunit protein mS23 (rsm25) of Aspergillus terreus (strain NIH 2624 / FGSC A1156).